Consider the following 113-residue polypeptide: Nucleoid-associated protein sync_0026 (113 aa).

It belongs to the YbaB/EbfC family. Homodimer.

Its subcellular location is the cytoplasm. The protein localises to the nucleoid. Binds to DNA and alters its conformation. May be involved in regulation of gene expression, nucleoid organization and DNA protection. The chain is Nucleoid-associated protein sync_0026 from Synechococcus sp. (strain CC9311).